The primary structure comprises 187 residues: MPVDLSKWSGPLSLQEVDERPQHPLHVTYAGAAVDELGKVLTPTQVKNRPTSISWEGLDSGKLYTLVLTDPDAPSRKDPKYREWHHFLVVNMKGNDISSGTVLSDYVGSGPPKGTGLHRYVWLVYEQDRPLKCDEPILSNRSGDHRGKFKVASFRKKYELRAPVAGTCYQAEWDDYVPKLYEQLSGK.

S6 and S13 each carry phosphoserine. At T42 the chain carries Phosphothreonine. Phosphoserine is present on residues S52, S54, S98, and S153. Residues 93 to 134 (KGNDISSGTVLSDYVGSGPPKGTGLHRYVWLVYEQDRPLKCD) form an interaction with RAF1 region.

It belongs to the phosphatidylethanolamine-binding protein family. Has a tendency to form dimers by disulfide cross-linking. Interacts with RAF1 and this interaction is enhanced if RAF1 is phosphorylated on residues 'Ser-338', 'Ser-339', 'Tyr-340' and 'Tyr-341'. Interacts with ALOX15; in response to IL13/interleukin-13, prevents the interaction of PEBP1 with RAF1 to activate the ERK signaling cascade.

Its subcellular location is the cytoplasm. Functionally, binds ATP, opioids and phosphatidylethanolamine. Has lower affinity for phosphatidylinositol and phosphatidylcholine. Serine protease inhibitor which inhibits thrombin, neuropsin and chymotrypsin but not trypsin, tissue type plasminogen activator and elastase. Inhibits the kinase activity of RAF1 by inhibiting its activation and by dissociating the RAF1/MEK complex and acting as a competitive inhibitor of MEK phosphorylation. Its function is as follows. HCNP may be involved in the function of the presynaptic cholinergic neurons of the central nervous system. HCNP increases the production of choline acetyltransferase but not acetylcholinesterase. Seems to be mediated by a specific receptor. The chain is Phosphatidylethanolamine-binding protein 1 (PEBP1) from Pongo abelii (Sumatran orangutan).